The chain runs to 157 residues: Small ribosomal subunit protein uS7 (157 aa).

The protein belongs to the universal ribosomal protein uS7 family. Part of the 30S ribosomal subunit. Contacts proteins S9 and S11.

Functionally, one of the primary rRNA binding proteins, it binds directly to 16S rRNA where it nucleates assembly of the head domain of the 30S subunit. Is located at the subunit interface close to the decoding center, probably blocks exit of the E-site tRNA. The chain is Small ribosomal subunit protein uS7 from Borreliella burgdorferi (strain ATCC 35210 / DSM 4680 / CIP 102532 / B31) (Borrelia burgdorferi).